The primary structure comprises 334 residues: DNA-directed RNA polymerase subunit alpha (334 aa).

The segment at 1 to 233 is alpha N-terminal domain (alpha-NTD); it reads MADQTISNVL…NLFTPLVSQE (233 aa). The tract at residues 263–334 is alpha C-terminal domain (alpha-CTD); that stretch reads DNENSYNLYN…QLKKRFKIQL (72 aa).

The protein belongs to the RNA polymerase alpha chain family. In terms of assembly, in plastids the minimal PEP RNA polymerase catalytic core is composed of four subunits: alpha, beta, beta', and beta''. When a (nuclear-encoded) sigma factor is associated with the core the holoenzyme is formed, which can initiate transcription.

It is found in the plastid. Its subcellular location is the chloroplast. It catalyses the reaction RNA(n) + a ribonucleoside 5'-triphosphate = RNA(n+1) + diphosphate. DNA-dependent RNA polymerase catalyzes the transcription of DNA into RNA using the four ribonucleoside triphosphates as substrates. This is DNA-directed RNA polymerase subunit alpha from Chaetosphaeridium globosum (Charophycean green alga).